Here is a 200-residue protein sequence, read N- to C-terminus: Recombination protein RecR (200 aa).

A C4-type zinc finger spans residues 57-72; it reads CNECRTFTEEDVCHIC. The 96-residue stretch at 81 to 176 folds into the Toprim domain; the sequence is GLLCVVESPA…DASRIAHGVP (96 aa).

This sequence belongs to the RecR family.

Functionally, may play a role in DNA repair. It seems to be involved in an RecBC-independent recombinational process of DNA repair. It may act with RecF and RecO. The sequence is that of Recombination protein RecR from Vibrio vulnificus (strain CMCP6).